The chain runs to 29 residues: Cyclotide mela-1 (29 aa).

A cross-link (cyclopeptide (Gly-Asp)) is located at residues 1 to 29 (GKYTCGETCFKGKCYTPGCTCSYPICKKD). 3 disulfides stabilise this stretch: cysteine 5/cysteine 19, cysteine 9/cysteine 21, and cysteine 14/cysteine 26.

Post-translationally, this is a cyclic peptide. Contains 3 disulfide bonds.

In terms of biological role, probably participates in a plant defense mechanism (Potential). Binds to and induces leakage in phospholipd membranes, particularly ones containing 1-palmitoyl-2-oleophosphatidylethanolamine (POPE). In vitro, displays cytotoxicity against cultured cells but no hemolytic activity towards fresh erythrocytes. Not active against Gram-negative bacterium E.coli ATCC 25922 or Gram-positive bacterium S.aureus ATCC 25923 up to a concentration of 64 uM. This chain is Cyclotide mela-1, found in Melicytus latifolius (Norfolk Island mahoe).